The chain runs to 212 residues: Ropporin-1 (212 aa).

An RIIa domain is found at 12–43 (PELPELLKQFTKDAIRTQPPDLIQWAAEYFGA). The residue at position 56 (Ser-56) is a Phosphoserine. Positions 209-212 (VRLE) are interaction with RHPN1.

It belongs to the ropporin family. As to quaternary structure, homodimer. Interacts with AKAP3. May interact with SPA17. Interacts with RHPN1. Interacts with FSCB; the interaction increases upon spermatozoa capacitation conditions. Interacts with CFAP61. Post-translationally, sumoylated, sumoylation decreases upon spermatozoa capacitation conditions. Testis-specific. Present in the most inner parts of seminiferous tubules (at protein level).

It is found in the cell projection. The protein localises to the cilium. It localises to the flagellum. Important for male fertility. With ROPN1L, involved in fibrous sheath integrity and sperm motility, plays a role in PKA-dependent signaling processes required for spermatozoa capacitation. This chain is Ropporin-1 (Ropn1), found in Mus musculus (Mouse).